A 774-amino-acid polypeptide reads, in one-letter code: 5-methyltetrahydropteroyltriglutamate--homocysteine methyltransferase (774 aa).

5-methyltetrahydropteroyltri-L-glutamate contacts are provided by residues 23–26 (RELK) and Lys123. L-homocysteine is bound by residues 446 to 448 (IGS) and Glu499. L-methionine is bound by residues 446 to 448 (IGS) and Glu499. Residues 530-531 (RC) and Trp576 each bind 5-methyltetrahydropteroyltri-L-glutamate. Asp614 lines the L-homocysteine pocket. Asp614 serves as a coordination point for L-methionine. Residue Glu620 coordinates 5-methyltetrahydropteroyltri-L-glutamate. Positions 656, 658, and 680 each coordinate Zn(2+). His709 serves as the catalytic Proton donor. Residue Cys741 coordinates Zn(2+).

It belongs to the vitamin-B12 independent methionine synthase family. The cofactor is Zn(2+).

It carries out the reaction 5-methyltetrahydropteroyltri-L-glutamate + L-homocysteine = tetrahydropteroyltri-L-glutamate + L-methionine. Its pathway is amino-acid biosynthesis; L-methionine biosynthesis via de novo pathway; L-methionine from L-homocysteine (MetE route): step 1/1. Catalyzes the transfer of a methyl group from 5-methyltetrahydrofolate to homocysteine resulting in methionine formation. The chain is 5-methyltetrahydropteroyltriglutamate--homocysteine methyltransferase from Aliivibrio fischeri (strain MJ11) (Vibrio fischeri).